Consider the following 103-residue polypeptide: N(4)-acetylcytidine amidohydrolase (103 aa).

In terms of domain architecture, ASCH spans Ile-6–Lys-101. Catalysis depends on Lys-21, which acts as the Proton acceptor. Thr-24 serves as the catalytic Nucleophile. Glu-74 acts as the Proton donor in catalysis.

It belongs to the N(4)-acetylcytidine amidohydrolase family.

The enzyme catalyses N(4)-acetylcytidine + H2O = cytidine + acetate + H(+). The catalysed reaction is N(4)-acetyl-2'-deoxycytidine + H2O = 2'-deoxycytidine + acetate + H(+). It carries out the reaction N(4)-acetylcytosine + H2O = cytosine + acetate + H(+). In terms of biological role, catalyzes the hydrolysis of N(4)-acetylcytidine (ac4C). The polypeptide is N(4)-acetylcytidine amidohydrolase (yqfB) (Escherichia fergusonii (strain ATCC 35469 / DSM 13698 / CCUG 18766 / IAM 14443 / JCM 21226 / LMG 7866 / NBRC 102419 / NCTC 12128 / CDC 0568-73)).